The chain runs to 150 residues: D-aminoacyl-tRNA deacylase (150 aa).

The short motif at 138–139 (GP) is the Gly-cisPro motif, important for rejection of L-amino acids element.

Belongs to the DTD family. In terms of assembly, homodimer.

Its subcellular location is the cytoplasm. The catalysed reaction is glycyl-tRNA(Ala) + H2O = tRNA(Ala) + glycine + H(+). It catalyses the reaction a D-aminoacyl-tRNA + H2O = a tRNA + a D-alpha-amino acid + H(+). In terms of biological role, an aminoacyl-tRNA editing enzyme that deacylates mischarged D-aminoacyl-tRNAs. Also deacylates mischarged glycyl-tRNA(Ala), protecting cells against glycine mischarging by AlaRS. Acts via tRNA-based rather than protein-based catalysis; rejects L-amino acids rather than detecting D-amino acids in the active site. By recycling D-aminoacyl-tRNA to D-amino acids and free tRNA molecules, this enzyme counteracts the toxicity associated with the formation of D-aminoacyl-tRNA entities in vivo and helps enforce protein L-homochirality. The chain is D-aminoacyl-tRNA deacylase from Chlorobaculum tepidum (strain ATCC 49652 / DSM 12025 / NBRC 103806 / TLS) (Chlorobium tepidum).